Here is a 328-residue protein sequence, read N- to C-terminus: Tetraacyldisaccharide 4'-kinase (328 aa).

55–62 serves as a coordination point for ATP; the sequence is TAGGNGKT.

This sequence belongs to the LpxK family.

The catalysed reaction is lipid A disaccharide (E. coli) + ATP = lipid IVA (E. coli) + ADP + H(+). The protein operates within glycolipid biosynthesis; lipid IV(A) biosynthesis; lipid IV(A) from (3R)-3-hydroxytetradecanoyl-[acyl-carrier-protein] and UDP-N-acetyl-alpha-D-glucosamine: step 6/6. Functionally, transfers the gamma-phosphate of ATP to the 4'-position of a tetraacyldisaccharide 1-phosphate intermediate (termed DS-1-P) to form tetraacyldisaccharide 1,4'-bis-phosphate (lipid IVA). This chain is Tetraacyldisaccharide 4'-kinase (lpxK), found in Escherichia coli (strain K12).